A 332-amino-acid chain; its full sequence is D-lactate dehydrogenase (332 aa).

NAD(+) is bound by residues 155 to 156 (RI), aspartate 175, 206 to 207 (VP), asparagine 212, and 233 to 235 (FAR). Residues arginine 235 and glutamate 264 contribute to the active site. Histidine 296 acts as the Proton donor in catalysis.

It belongs to the D-isomer specific 2-hydroxyacid dehydrogenase family. As to quaternary structure, homodimer.

The catalysed reaction is (R)-lactate + NAD(+) = pyruvate + NADH + H(+). The polypeptide is D-lactate dehydrogenase (Lactiplantibacillus pentosus (Lactobacillus pentosus)).